The primary structure comprises 265 residues: 4-hydroxy-tetrahydrodipicolinate reductase (265 aa).

Residues 7–12, aspartate 33, 96–98, and 120–123 each bind NAD(+); these read GASGRM, GTT, and AANM. Histidine 153 functions as the Proton donor/acceptor in the catalytic mechanism. Histidine 154 provides a ligand contact to (S)-2,3,4,5-tetrahydrodipicolinate. Lysine 157 acts as the Proton donor in catalysis. A (S)-2,3,4,5-tetrahydrodipicolinate-binding site is contributed by 163 to 164; it reads GT.

Belongs to the DapB family.

Its subcellular location is the cytoplasm. It carries out the reaction (S)-2,3,4,5-tetrahydrodipicolinate + NAD(+) + H2O = (2S,4S)-4-hydroxy-2,3,4,5-tetrahydrodipicolinate + NADH + H(+). The catalysed reaction is (S)-2,3,4,5-tetrahydrodipicolinate + NADP(+) + H2O = (2S,4S)-4-hydroxy-2,3,4,5-tetrahydrodipicolinate + NADPH + H(+). It functions in the pathway amino-acid biosynthesis; L-lysine biosynthesis via DAP pathway; (S)-tetrahydrodipicolinate from L-aspartate: step 4/4. In terms of biological role, catalyzes the conversion of 4-hydroxy-tetrahydrodipicolinate (HTPA) to tetrahydrodipicolinate. In Cupriavidus pinatubonensis (strain JMP 134 / LMG 1197) (Cupriavidus necator (strain JMP 134)), this protein is 4-hydroxy-tetrahydrodipicolinate reductase.